The sequence spans 193 residues: Acyl carrier protein phosphodiesterase (193 aa).

Belongs to the AcpH family.

It catalyses the reaction holo-[ACP] + H2O = apo-[ACP] + (R)-4'-phosphopantetheine + H(+). Functionally, converts holo-ACP to apo-ACP by hydrolytic cleavage of the phosphopantetheine prosthetic group from ACP. This chain is Acyl carrier protein phosphodiesterase, found in Salmonella choleraesuis (strain SC-B67).